We begin with the raw amino-acid sequence, 163 residues long: Phosphopantetheine adenylyltransferase (163 aa).

Serine 11 contacts substrate. ATP-binding positions include serine 11–phenylalanine 12 and histidine 19. Positions 43, 76, and 90 each coordinate substrate. Residues glycine 91–arginine 93, glutamate 101, and tryptophan 126–serine 132 each bind ATP.

Belongs to the bacterial CoaD family. As to quaternary structure, homohexamer. Mg(2+) serves as cofactor.

It is found in the cytoplasm. The enzyme catalyses (R)-4'-phosphopantetheine + ATP + H(+) = 3'-dephospho-CoA + diphosphate. It functions in the pathway cofactor biosynthesis; coenzyme A biosynthesis; CoA from (R)-pantothenate: step 4/5. Reversibly transfers an adenylyl group from ATP to 4'-phosphopantetheine, yielding dephospho-CoA (dPCoA) and pyrophosphate. This chain is Phosphopantetheine adenylyltransferase, found in Streptococcus pyogenes serotype M2 (strain MGAS10270).